We begin with the raw amino-acid sequence, 113 residues long: Large ribosomal subunit protein bL19m (113 aa).

It belongs to the bacterial ribosomal protein bL19 family.

It is found in the mitochondrion. The sequence is that of Large ribosomal subunit protein bL19m (RPL19) from Reclinomonas americana.